Consider the following 735-residue polypeptide: Ion-translocating oxidoreductase complex subunit C (735 aa).

4Fe-4S ferredoxin-type domains lie at 368 to 397 (MGAP…QQLY) and 407 to 436 (KATA…VQYF). [4Fe-4S] cluster contacts are provided by cysteine 377, cysteine 380, cysteine 383, cysteine 387, cysteine 416, cysteine 419, cysteine 422, and cysteine 426. The disordered stretch occupies residues 562 to 713 (AIARAKARKQ…AEPADPRKAA (152 aa)).

The protein belongs to the 4Fe4S bacterial-type ferredoxin family. RnfC subfamily. In terms of assembly, the complex is composed of six subunits: RsxA, RsxB, RsxC, RsxD, RsxE and RsxG. [4Fe-4S] cluster serves as cofactor.

The protein resides in the cell inner membrane. Its function is as follows. Part of a membrane-bound complex that couples electron transfer with translocation of ions across the membrane. Required to maintain the reduced state of SoxR. The chain is Ion-translocating oxidoreductase complex subunit C from Salmonella newport (strain SL254).